Consider the following 459-residue polypeptide: Nuclear hormone receptor family member nhr-11 (459 aa).

The segment at residues 2 to 81 is a DNA-binding region (nuclear receptor); that stretch reads GPLCAVCESP…AGMRSELVRS (80 aa). 2 NR C4-type zinc fingers span residues 5 to 26 and 42 to 69; these read CAVCESPTAFTLHFGGRCCKAC and CAADDPCEIHFKFPGMRLVCRECRLRKC. 2 disordered regions span residues 90–119 and 134–162; these read RRKDSRNNSDAAPNSNSPSTRQSSSPEEMD and DLPLTPSISHPPLPTQLMPEESSRTSSFD. Positions 97 to 115 are enriched in low complexity; sequence NSDAAPNSNSPSTRQSSSP. Positions 188-458 constitute an NR LBD domain; sequence ENNSILQYYH…SMLHEMLNFQ (271 aa).

This sequence belongs to the nuclear hormone receptor family.

The protein localises to the nucleus. Functionally, orphan nuclear receptor. In Caenorhabditis elegans, this protein is Nuclear hormone receptor family member nhr-11 (nhr-11).